Consider the following 71-residue polypeptide: Brevinin-1CG4 (71 aa).

Positions 1-22 (MFTLKKSLLLLFFLGTINLSLC) are cleaved as a signal peptide. Positions 23 to 45 (EQERNADEEERRDDSDKRDVEVE) are cleaved as a propeptide — removed in mature form. Cys65 and Cys71 are disulfide-bonded.

This sequence belongs to the frog skin active peptide (FSAP) family. Brevinin subfamily. As to expression, expressed by the skin glands.

It localises to the secreted. Its function is as follows. Antimicrobial peptide active against a variety of Gram-positive and some Gram-negative bacterial strains. Has antifungal activity against C.albicans ATCC 10231 and a slime mold isolate. Has hemolytic activity against human erythrocytes. The sequence is that of Brevinin-1CG4 from Amolops chunganensis (Chungan torrent frog).